A 3890-amino-acid chain; its full sequence is Extracellular matrix-binding protein EbhB (3890 aa).

The first 39 residues, 1–39 (MNYRDKIQKFSIRKYTVGTFSTVIATLVFLGFNTSQAHA), serve as a signal peptide directing secretion. Positions 41 to 59 (ETNQPASVVKQKQQSNNEQ) are enriched in polar residues. 4 disordered regions span residues 41–152 (ETNQ…GNDN), 249–277 (MPQRQQTSRRSNRIQTRSVESRAAEPRSV), 1347–1372 (NEKAQAEAGGRPNYRTTGYSQSNATT), and 2418–2438 (TITPKAGTGHSVSSNPSTLTA). The segment covering 65 to 78 (SQVQNSQNSQNSQS) has biased composition (low complexity). Residues 79–117 (LSATHENEQPNNSQANLVNQKVAQSSTTNDEQPASQNVN) show a composition bias toward polar residues. Residues 130–140 (PDKEESKHKQN) show a composition bias toward basic and acidic residues. 4 stretches are compositionally biased toward polar residues: residues 141-151 (ESQSANKNGND), 250-266 (PQRQQTSRRSNRIQTRS), 1360-1372 (YRTTGYSQSNATT), and 2427-2438 (HSVSSNPSTLTA). 13 FIVAR domains span residues 2524-2580 (AKNH…VSDA), 2610-2666 (SKNN…ISDE), 2687-2750 (DTHA…VQSA), 2780-2836 (AKTK…IAAE), 2864-2919 (AKTQ…IRQN), 2947-3002 (AKNQ…INTN), 3030-3085 (AKTQ…INDK), 3154-3212 (AMTK…VNQK), 3280-3339 (AMTG…VNNA), 3407-3465 (AMGN…VNRA), 3533-3591 (AMGN…VTEA), 3659-3717 (AMNT…ITQK), and 3785-3843 (AMAN…VEAA).

This Staphylococcus aureus (strain N315) protein is Extracellular matrix-binding protein EbhB (ebhB).